The following is a 98-amino-acid chain: NADH-ubiquinone oxidoreductase chain 4L (98 aa).

3 helical membrane passes run 1 to 21, 25 to 45, and 59 to 81; these read MSLAHINIFLAFTVSLVGLLM, HLMSSLLCLEGMMLSLFVMAT, and MPIILLVFAACERALGLSLLVMV.

Belongs to the complex I subunit 4L family. Core subunit of respiratory chain NADH dehydrogenase (Complex I) which is composed of 45 different subunits.

The protein resides in the mitochondrion inner membrane. The enzyme catalyses a ubiquinone + NADH + 5 H(+)(in) = a ubiquinol + NAD(+) + 4 H(+)(out). In terms of biological role, core subunit of the mitochondrial membrane respiratory chain NADH dehydrogenase (Complex I) which catalyzes electron transfer from NADH through the respiratory chain, using ubiquinone as an electron acceptor. Part of the enzyme membrane arm which is embedded in the lipid bilayer and involved in proton translocation. The chain is NADH-ubiquinone oxidoreductase chain 4L (MT-ND4L) from Equus asinus (Donkey).